The primary structure comprises 122 residues: MSKLSRKQQTQKRHRRLRRHITGTSNRPRLAVFRSNNHIYAQLIDDAAQSTLCSASTVDKELRSGLKNNAGSCDASVAVGALVAKRAIAKGIEQVVFDRGGNLYHGRIKALADAAREAGLQF.

Residues M1–I21 are compositionally biased toward basic residues. The tract at residues M1 to S25 is disordered.

It belongs to the universal ribosomal protein uL18 family. As to quaternary structure, part of the 50S ribosomal subunit; part of the 5S rRNA/L5/L18/L25 subcomplex. Contacts the 5S and 23S rRNAs.

This is one of the proteins that bind and probably mediate the attachment of the 5S RNA into the large ribosomal subunit, where it forms part of the central protuberance. This chain is Large ribosomal subunit protein uL18, found in Synechococcus sp. (strain CC9902).